Here is a 292-residue protein sequence, read N- to C-terminus: ATP synthase gamma chain (292 aa).

It belongs to the ATPase gamma chain family. F-type ATPases have 2 components, CF(1) - the catalytic core - and CF(0) - the membrane proton channel. CF(1) has five subunits: alpha(3), beta(3), gamma(1), delta(1), epsilon(1). CF(0) has three main subunits: a, b and c.

The protein resides in the cell membrane. Produces ATP from ADP in the presence of a proton gradient across the membrane. The gamma chain is believed to be important in regulating ATPase activity and the flow of protons through the CF(0) complex. This Streptococcus pneumoniae serotype 2 (strain D39 / NCTC 7466) protein is ATP synthase gamma chain.